A 311-amino-acid polypeptide reads, in one-letter code: Putative dihydroorotate dehydrogenase A (fumarate) (311 aa).

Residues K45, 69–73, and N128 each bind substrate; that span reads NSMGL. 45–46 is a binding site for FMN; that stretch reads KT. N128 contributes to the FMN binding site. C131 (nucleophile) is an active-site residue. Residues K165 and V193 each contribute to the FMN site. 194–195 contributes to the substrate binding site; it reads NS. FMN-binding positions include G220, 248–249, and 270–271; these read GG and GT.

Belongs to the dihydroorotate dehydrogenase family. Type 1 subfamily. In terms of assembly, homodimer. It depends on FMN as a cofactor.

It localises to the cytoplasm. The catalysed reaction is (S)-dihydroorotate + fumarate = orotate + succinate. The protein operates within pyrimidine metabolism; UMP biosynthesis via de novo pathway. Its function is as follows. Catalyzes the conversion of dihydroorotate to orotate with fumarate as the electron acceptor. This Streptococcus equi subsp. equi (strain 4047) protein is Putative dihydroorotate dehydrogenase A (fumarate) (pyrD).